A 179-amino-acid chain; its full sequence is Probable DNA-directed RNA polymerase subunit delta (179 aa).

The HTH HARE-type domain maps to 14 to 81 (MSLVELAYEI…GDQRWGLRSW (68 aa)). The tract at residues 108 to 179 (VVEEDFDEIE…DDLDDNEEEK (72 aa)) is disordered. Over residues 109–179 (VEEDFDEIEE…DDLDDNEEEK (71 aa)) the composition is skewed to acidic residues.

The protein belongs to the RpoE family. RNAP is composed of a core of 2 alpha, a beta and a beta' subunits. The core is associated with a delta subunit and one of several sigma factors.

Its function is as follows. Participates in both the initiation and recycling phases of transcription. In the presence of the delta subunit, RNAP displays an increased specificity of transcription, a decreased affinity for nucleic acids, and an increased efficiency of RNA synthesis because of enhanced recycling. In Bacillus pumilus (strain SAFR-032), this protein is Probable DNA-directed RNA polymerase subunit delta.